The following is a 419-amino-acid chain: UDP-N-acetylglucosamine 1-carboxyvinyltransferase 2 (419 aa).

Position 24-25 (24-25 (KN)) interacts with phosphoenolpyruvate. Arg94 is a UDP-N-acetyl-alpha-D-glucosamine binding site. Cys118 functions as the Proton donor in the catalytic mechanism. Position 118 is a 2-(S-cysteinyl)pyruvic acid O-phosphothioketal (Cys118). UDP-N-acetyl-alpha-D-glucosamine contacts are provided by residues 123–127 (RPIDQ), Asp307, and Ile329.

Belongs to the EPSP synthase family. MurA subfamily.

Its subcellular location is the cytoplasm. It carries out the reaction phosphoenolpyruvate + UDP-N-acetyl-alpha-D-glucosamine = UDP-N-acetyl-3-O-(1-carboxyvinyl)-alpha-D-glucosamine + phosphate. It participates in cell wall biogenesis; peptidoglycan biosynthesis. In terms of biological role, cell wall formation. Adds enolpyruvyl to UDP-N-acetylglucosamine. The chain is UDP-N-acetylglucosamine 1-carboxyvinyltransferase 2 from Staphylococcus epidermidis (strain ATCC 35984 / DSM 28319 / BCRC 17069 / CCUG 31568 / BM 3577 / RP62A).